A 194-amino-acid chain; its full sequence is Lysozyme g (194 aa).

Active-site residues include E71 and D84.

Belongs to the glycosyl hydrolase 23 family. As to expression, expressed in intestine, liver, spleen, anterior kidney, posterior kidney, heart, gill, muscle and leukocytes.

The catalysed reaction is Hydrolysis of (1-&gt;4)-beta-linkages between N-acetylmuramic acid and N-acetyl-D-glucosamine residues in a peptidoglycan and between N-acetyl-D-glucosamine residues in chitodextrins.. In terms of biological role, has lytic activity against M.lysodeikticus, V.alginolyticus from Epinephelus fario, V.vulnificus from culture water, A.hydrophila from soft-shell turtle, A.hydrophila from goldfish and V.parahaemolyticus, P.fluorescens and V.fluvialis from culture water. The protein is Lysozyme g of Epinephelus coioides (Orange-spotted grouper).